Reading from the N-terminus, the 308-residue chain is Methionyl-tRNA formyltransferase (308 aa).

Residue 110 to 113 participates in (6S)-5,6,7,8-tetrahydrofolate binding; that stretch reads SLLP.

The protein belongs to the Fmt family.

The enzyme catalyses L-methionyl-tRNA(fMet) + (6R)-10-formyltetrahydrofolate = N-formyl-L-methionyl-tRNA(fMet) + (6S)-5,6,7,8-tetrahydrofolate + H(+). In terms of biological role, attaches a formyl group to the free amino group of methionyl-tRNA(fMet). The formyl group appears to play a dual role in the initiator identity of N-formylmethionyl-tRNA by promoting its recognition by IF2 and preventing the misappropriation of this tRNA by the elongation apparatus. This Neisseria gonorrhoeae (strain ATCC 700825 / FA 1090) protein is Methionyl-tRNA formyltransferase.